A 41-amino-acid chain; its full sequence is Photosystem I reaction center subunit IX (41 aa).

The helical transmembrane segment at 7–27 threads the bilayer; it reads YLSTAPVVALIWFTFTAGLLI.

This sequence belongs to the PsaJ family.

Its subcellular location is the plastid. It is found in the chloroplast thylakoid membrane. Its function is as follows. May help in the organization of the PsaE and PsaF subunits. The chain is Photosystem I reaction center subunit IX from Pleurastrum terricola (Filamentous green alga).